We begin with the raw amino-acid sequence, 66 residues long: Large ribosomal subunit protein uL29 (66 aa).

This sequence belongs to the universal ribosomal protein uL29 family.

The protein is Large ribosomal subunit protein uL29 of Ruegeria pomeroyi (strain ATCC 700808 / DSM 15171 / DSS-3) (Silicibacter pomeroyi).